Reading from the N-terminus, the 304-residue chain is Glycine--tRNA ligase alpha subunit (304 aa).

The protein belongs to the class-II aminoacyl-tRNA synthetase family. As to quaternary structure, tetramer of two alpha and two beta subunits.

It is found in the cytoplasm. It carries out the reaction tRNA(Gly) + glycine + ATP = glycyl-tRNA(Gly) + AMP + diphosphate. This is Glycine--tRNA ligase alpha subunit from Vibrio atlanticus (strain LGP32) (Vibrio splendidus (strain Mel32)).